The chain runs to 337 residues: Exopolysaccharide phosphotransferase cps2G (337 aa).

This sequence belongs to the stealth family.

This chain is Exopolysaccharide phosphotransferase cps2G (cps2G), found in Lactiplantibacillus plantarum (strain ATCC BAA-793 / NCIMB 8826 / WCFS1) (Lactobacillus plantarum).